The chain runs to 354 residues: MASSKAFGWAAKDASGHLSPFHFTRRQNEADDVTLKILYCGVCHSDLHTVKNDWGFTTYPVVPGHEIAGIVTKVGSNVTKFKEGDRVGVGVIVDSCQECECCQQDLESYCPKPVFTYNSPYKGTRTQGGYSDFVVVHQRFVLQFPDNLPLDAGAPLLCAGITVYSPMKYYGMTEPGKHLGVAGLGGLGHVAIKFGKAFGLKVTVISSSPNKESEAIDVLGADSFLLSSDPEKMKAATGTMDYIIDTISAVHSLVSLLGLLKLNGKLVTVGLPSKPLQLPIFPLVAGRKLIGGSNFGGLKETQEMLDFCGKHNIAANIELIKMDEINTAIERLSKADVKYRFVIDVANSLSSSNM.

Zn(2+) contacts are provided by Cys-43, His-65, Cys-96, Cys-99, Cys-102, Cys-110, and Cys-158.

It belongs to the zinc-containing alcohol dehydrogenase family. Requires Zn(2+) as cofactor.

The enzyme catalyses D-mannitol + NAD(+) = D-mannose + NADH + H(+). Oxidizes mannitol to mannose. Provides the initial step by which translocated mannitol is committed to central metabolism and, by regulating mannitol pool size, is important in regulating salt tolerance at the cellular level. In Stylosanthes humilis (Townsville stylo), this protein is Probable mannitol dehydrogenase 1 (CAD1).